Reading from the N-terminus, the 279-residue chain is DegV domain-containing protein CPE1310 (279 aa).

The DegV domain occupies 4–277 (IKIITDSTCD…PKVCALFYVE (274 aa)). The hexadecanoate site is built by threonine 62 and serine 94.

May bind long-chain fatty acids, such as palmitate, and may play a role in lipid transport or fatty acid metabolism. In Clostridium perfringens (strain 13 / Type A), this protein is DegV domain-containing protein CPE1310.